The chain runs to 471 residues: PTS system mannitol-specific EIICB component (471 aa).

The Cytoplasmic segment spans residues 1–29 (MTHTSENQAGFRVKIQRFGSYLSGMIMPN). The 325-residue stretch at 18-342 (FGSYLSGMIM…FFVASIFLKS (325 aa)) folds into the PTS EIIC type-2 domain. A helical transmembrane segment spans residues 30-51 (IGAFIAWGIITALFIPTGWLPN). The Extracellular portion of the chain corresponds to 52-55 (ETFA). The helical transmembrane segment at 56–76 (KLVGPMITYLLPLLIGYTGGK) threads the bilayer. The Cytoplasmic segment spans residues 77 to 139 (MIYDVRGGVV…QGFEMLVNNF (63 aa)). Residues 140-161 (SAGIIGGLLTLAAFKGVGPVVS) traverse the membrane as a helical segment. Residues 162-170 (AISKTLAAG) lie on the Extracellular side of the membrane. The chain crosses the membrane as a helical span at residues 171 to 191 (VEKIVDLHLLPLANIFIEPGK). The Cytoplasmic segment spans residues 192 to 278 (VLFLNNAINH…VLMRPILILA (87 aa)). Residues 279–298 (AIAGGVSGVLTFTIFDAGLV) form a helical membrane-spanning segment. The Extracellular segment spans residues 299-318 (AVPSPGSIFALLAMTPKGNY). A helical transmembrane segment spans residues 319 to 340 (LGVLAGVLVATAVSFFVASIFL). The Cytoplasmic segment spans residues 341 to 471 (KSAKNNEEDI…YDELIEMLKK (131 aa)). Residues 383-471 (KKIVFACDAG…YDELIEMLKK (89 aa)) form the PTS EIIB type-2 domain. Cys389 (phosphocysteine intermediate; for EIIB activity) is an active-site residue. A Phosphocysteine; by EIIA modification is found at Cys389.

Homodimer.

It localises to the cell membrane. It carries out the reaction D-mannitol(out) + N(pros)-phospho-L-histidyl-[protein] = D-mannitol 1-phosphate(in) + L-histidyl-[protein]. In terms of biological role, the phosphoenolpyruvate-dependent sugar phosphotransferase system (sugar PTS), a major carbohydrate active transport system, catalyzes the phosphorylation of incoming sugar substrates concomitantly with their translocation across the cell membrane. The enzyme II CmtAB PTS system is involved in D-mannitol transport. The sequence is that of PTS system mannitol-specific EIICB component from Geobacillus stearothermophilus (Bacillus stearothermophilus).